The following is a 1825-amino-acid chain: Serine protease/ABC transporter B family protein tagD (1825 aa).

The signal sequence occupies residues 1-26 (MKSNTNIRVLLVSGLILIFIFLGIKF). The Peptidase S8 domain occupies 307–727 (PKAIFGTKDT…NAVFDTFAGA (421 aa)). Residues D338 and H384 each act as charge relay system in the active site. N629 carries N-linked (GlcNAc...) asparagine glycosylation. The active-site Charge relay system is the S652. N-linked (GlcNAc...) asparagine glycosylation is found at N704, N781, N849, and N896. The helical transmembrane segment at 971 to 991 (YIVIIVAGGTMSLIITVLILI) threads the bilayer. N1018 carries an N-linked (GlcNAc...) asparagine glycan. The next 4 helical transmembrane spans lie at 1071–1091 (FIIEITISTACSLVATAASIL), 1116–1136 (FIIIFLLALLEFVFSTISSWI), 1189–1209 (GILLSVSVGICKFVGSLVFIF), and 1210–1230 (TISWKLSLAFFATVPVLAIVT). Positions 1075-1358 (ITISTACSLV…LFGVYSSYVQ (284 aa)) constitute an ABC transmembrane type-1 domain. An N-linked (GlcNAc...) asparagine glycan is attached at N1295. The next 2 membrane-spanning stretches (helical) occupy residues 1304–1324 (WLMVESLAFIILYFGAYLAIQ) and 1327–1347 (FTVGLLVSFSLYIGYVIDSST). Positions 1386 to 1529 (DNIIDTNQDN…NDDPNDNNGI (144 aa)) are disordered. Residues 1388–1402 (IIDTNQDNNNNNNND) show a composition bias toward low complexity. Residues 1403–1415 (DISDSSSDDDDDN) are compositionally biased toward acidic residues. A glycan (N-linked (GlcNAc...) asparagine) is linked at N1424. Low complexity predominate over residues 1465–1494 (GEGIDNNNNNNNDNNINDDNNQQDPNNNNN). The span at 1495–1514 (EIDDDGDDDGDDDDEGEDEN) shows a compositional bias: acidic residues. Residues 1515 to 1529 (NNNNNNDDPNDNNGI) are compositionally biased toward low complexity. In terms of domain architecture, ABC transporter spans 1576 to 1813 (IEFKNVSFCY…KGKYYRMFAF (238 aa)). N1580 carries an N-linked (GlcNAc...) asparagine glycan. Residue 1611-1618 (GPSGSGKS) participates in ATP binding. N-linked (GlcNAc...) asparagine glycosylation is found at N1715 and N1755.

The protein in the C-terminal section; belongs to the ABC transporter superfamily. ABCB family. Multidrug resistance exporter (TC 3.A.1.201) subfamily. In the N-terminal section; belongs to the peptidase S8 family.

The protein localises to the membrane. This chain is Serine protease/ABC transporter B family protein tagD (tagD), found in Dictyostelium discoideum (Social amoeba).